The chain runs to 266 residues: rRNA adenine N-6-methyltransferase (266 aa).

S-adenosyl-L-methionine-binding residues include His-14, Thr-16, Gly-41, Glu-62, Asp-87, and Asn-103.

Belongs to the class I-like SAM-binding methyltransferase superfamily. rRNA adenine N(6)-methyltransferase family.

Its function is as follows. Involved in erythromycin resistance. The chain is rRNA adenine N-6-methyltransferase (ermF) from Bacteroides fragilis.